We begin with the raw amino-acid sequence, 267 residues long: Putative phosphatase bbp_030 (267 aa).

Asp8 serves as the catalytic Nucleophile. Asp8 contacts Mg(2+). Leu9 is a binding site for phosphate. Asp10 contributes to the Mg(2+) binding site. Phosphate contacts are provided by residues 42-43 (TG) and Lys191. Asp214 is a binding site for Mg(2+). Asn217 provides a ligand contact to phosphate.

This sequence belongs to the HAD-like hydrolase superfamily. Cof family. Mg(2+) serves as cofactor.

This Buchnera aphidicola subsp. Baizongia pistaciae (strain Bp) protein is Putative phosphatase bbp_030.